A 409-amino-acid chain; its full sequence is NADH-quinone oxidoreductase subunit D (409 aa).

This sequence belongs to the complex I 49 kDa subunit family. As to quaternary structure, NDH-1 is composed of 14 different subunits. Subunits NuoB, C, D, E, F, and G constitute the peripheral sector of the complex.

It localises to the cell inner membrane. It catalyses the reaction a quinone + NADH + 5 H(+)(in) = a quinol + NAD(+) + 4 H(+)(out). Functionally, NDH-1 shuttles electrons from NADH, via FMN and iron-sulfur (Fe-S) centers, to quinones in the respiratory chain. The immediate electron acceptor for the enzyme in this species is believed to be ubiquinone. Couples the redox reaction to proton translocation (for every two electrons transferred, four hydrogen ions are translocated across the cytoplasmic membrane), and thus conserves the redox energy in a proton gradient. This chain is NADH-quinone oxidoreductase subunit D, found in Sulfurovum sp. (strain NBC37-1).